Reading from the N-terminus, the 138-residue chain is Small ribosomal subunit protein uS9c (138 aa).

It belongs to the universal ribosomal protein uS9 family.

Its subcellular location is the plastid. The protein resides in the chloroplast. The polypeptide is Small ribosomal subunit protein uS9c (rps9) (Trieres chinensis (Marine centric diatom)).